A 335-amino-acid polypeptide reads, in one-letter code: Beta-ketoacyl-[acyl-carrier-protein] synthase III 1 (335 aa).

Active-site residues include Cys-116 and His-256. The ACP-binding stretch occupies residues Gln-257–Arg-261. Residue Asn-286 is part of the active site.

The protein belongs to the thiolase-like superfamily. FabH family. Homodimer.

The protein localises to the cytoplasm. It catalyses the reaction malonyl-[ACP] + acetyl-CoA + H(+) = 3-oxobutanoyl-[ACP] + CO2 + CoA. It functions in the pathway lipid metabolism; fatty acid biosynthesis. Functionally, catalyzes the condensation reaction of fatty acid synthesis by the addition to an acyl acceptor of two carbons from malonyl-ACP. Catalyzes the first condensation reaction which initiates fatty acid synthesis and may therefore play a role in governing the total rate of fatty acid production. Possesses both acetoacetyl-ACP synthase and acetyl transacylase activities. Its substrate specificity determines the biosynthesis of branched-chain and/or straight-chain of fatty acids. The polypeptide is Beta-ketoacyl-[acyl-carrier-protein] synthase III 1 (Bacteroides thetaiotaomicron (strain ATCC 29148 / DSM 2079 / JCM 5827 / CCUG 10774 / NCTC 10582 / VPI-5482 / E50)).